Reading from the N-terminus, the 961-residue chain is Gamma-tubulin small complex component GCP2 (961 aa).

The tract at residues 15 to 76 (NLHRSPKLAT…KPSIPPLKSE (62 aa)) is disordered. Polar residues predominate over residues 43–54 (LGSNVVSHPTRS). Basic and acidic residues predominate over residues 55-65 (SPEKTTDKPAD).

The protein belongs to the TUBGCP family. Component of the gamma-tubulin small complex (gamma-TuSC) composed of tubulin gamma chain, gamma-tubulin complex protein 2 (GCP2) and gamma-tubulin complex protein 3 (GCP3). Interacts with tubulin gamma chain.

It localises to the cytoplasm. Its subcellular location is the cytoskeleton. It is found in the flagellum axoneme. The protein localises to the flagellum basal body. Functionally, component of the gamma-tubulin small complex (gamma-TuSC) involved in microtubule (MT) nucleation for the formation of median bodies and in the biogenesis of flagella. Gamma-TuSC may be required for the correct positioning of EB1 within the trophozoites. The chain is Gamma-tubulin small complex component GCP2 from Giardia intestinalis (strain ATCC 50803 / WB clone C6) (Giardia lamblia).